The following is a 328-amino-acid chain: Tyrosine recombinase XerC (328 aa).

The 88-residue stretch at 13 to 100 (QAPHPQIAAY…AWRGWFKWMA (88 aa)) folds into the Core-binding (CB) domain. Positions 122–319 (RLPKALSVEQ…DFQHLAKIYD (198 aa)) constitute a Tyr recombinase domain. Residues Arg162, Lys197, His271, Arg274, and His297 contribute to the active site. Tyr306 serves as the catalytic O-(3'-phospho-DNA)-tyrosine intermediate.

It belongs to the 'phage' integrase family. XerC subfamily. In terms of assembly, forms a cyclic heterotetrameric complex composed of two molecules of XerC and two molecules of XerD.

Its subcellular location is the cytoplasm. Site-specific tyrosine recombinase, which acts by catalyzing the cutting and rejoining of the recombining DNA molecules. The XerC-XerD complex is essential to convert dimers of the bacterial chromosome into monomers to permit their segregation at cell division. It also contributes to the segregational stability of plasmids. This Ralstonia pickettii (strain 12J) protein is Tyrosine recombinase XerC.